The sequence spans 675 residues: Genome polyprotein (675 aa).

The RdRp catalytic domain maps to 92 to 216; the sequence is WVYCDADGSQ…AIHPDHEHVL (125 aa). Residues 397 to 424 are compositionally biased toward basic and acidic residues; the sequence is GLNEKLKEKENQKEKEKEKQKEKEKDGA. Residues 397–447 form a disordered region; sequence GLNEKLKEKENQKEKEKEKQKEKEKDGASDGNDVSTSTKTGERDRDVNVGT.

The protein belongs to the potyviridae genome polyprotein family. Post-translationally, genome polyprotein of potyviruses undergoes post-translational proteolytic processing by the main proteinase NIa-pro resulting in the production of at least ten individual proteins. The P1 proteinase and the HC-pro cleave only their respective C-termini autocatalytically. 6K1 is essential for proper proteolytic separation of P3 from CI.

It localises to the virion. It catalyses the reaction RNA(n) + a ribonucleoside 5'-triphosphate = RNA(n+1) + diphosphate. An RNA-dependent RNA polymerase that plays an essential role in the virus replication. Its function is as follows. Involved in aphid transmission, cell-to-cell and systemis movement, encapsidation of the viral RNA and in the regulation of viral RNA amplification. The sequence is that of Genome polyprotein from Papaya ringspot virus (strain P / mutant HA 5-1).